The primary structure comprises 1436 residues: Gag-Pol polyprotein (1436 aa).

Gly2 carries N-myristoyl glycine; by host lipidation. The segment at 7–31 (VLSGGKLDKWEKIRLRPRGKKRYKL) is interaction with Gp41. Residues 8–43 (LSGGKLDKWEKIRLRPRGKKRYKLKHIVWASRELER) are interaction with host CALM1. The tract at residues 12–19 (KLDKWEKI) is interaction with host AP3D1. An interaction with membrane phosphatidylinositol 4,5-bisphosphate and RNA region spans residues 14–33 (DKWEKIRLRPRGKKRYKLKH). Positions 16–22 (WEKIRLR) match the Nuclear export signal motif. A Nuclear localization signal motif is present at residues 26–32 (KKRYKLK). The segment at 73–77 (EELKS) is interaction with membrane phosphatidylinositol 4,5-bisphosphate. The disordered stretch occupies residues 106–128 (EEQNKSKKKAQQAAADTGNGSQV). Tyr132 is subject to Phosphotyrosine; by host. Residues 189–227 (NTVGGHQAAMQMLKETINEEAAEWDRLHPVHAGPIAPGQ) form an interaction with human PPIA/CYPA and NUP153 region. Residues 277-363 (YSPISILDIR…GGPSHKARIL (87 aa)) form a dimerization/Multimerization of capsid protein p24 region. CCHC-type zinc fingers lie at residues 390 to 407 (VKCF…NCRA) and 411 to 428 (KGCW…DCTN). The segment at 446-465 (KARELSSEQTRANSPTRREL) is disordered. The interval 490-494 (PQITL) is dimerization of protease. Positions 509–578 (KEALLDTGAD…TPVNIIGRNL (70 aa)) constitute a Peptidase A2 domain. Asp514 acts as the For protease activity; shared with dimeric partner in catalysis. 2 dimerization of protease regions span residues 538-544 (GIGGFIK) and 577-589 (NLLT…LNFP). The region spanning 632-822 (EGKISKIGPE…PPFLWMGYEL (191 aa)) is the Reverse transcriptase domain. Residues Asp698, Asp773, and Asp774 each coordinate Mg(2+). The interval 815–823 (FLWMGYELH) is RT 'primer grip'. Residues 986-1002 (WEAWWTEYWQATWIPEW) carry the Tryptophan repeat motif motif. The RNase H type-1 domain occupies 1022-1145 (IIGAETFYVD…VDRLVSTGIR (124 aa)). 4 residues coordinate Mg(2+): Asp1031, Glu1066, Asp1086, and Asp1137. The segment at 1151–1192 (DGIDKAQDEHEKYHSNWRAMASDFNLPPVVAKEIVASCDKCQ) adopts an Integrase-type zinc-finger fold. 4 residues coordinate Zn(2+): His1160, His1164, Cys1188, and Cys1191. One can recognise an Integrase catalytic domain in the interval 1202–1352 (VDCSPGIWQL…SAGERIVDII (151 aa)). Mg(2+) contacts are provided by Asp1212, Asp1264, and Glu1300. The segment at residues 1371 to 1418 (FRVYYRDSRDPLWKGHAKLLWKGEGAVVIQDNSDIKVVPRRKAKIIRD) is a DNA-binding region (integrase-type).

In terms of assembly, homotrimer; further assembles as hexamers of trimers. Interacts with gp41 (via C-terminus). Interacts with host CALM1; this interaction induces a conformational change in the Matrix protein, triggering exposure of the myristate group. Interacts with host AP3D1; this interaction allows the polyprotein trafficking to multivesicular bodies during virus assembly. Part of the pre-integration complex (PIC) which is composed of viral genome, matrix protein, Vpr and integrase. As to quaternary structure, homodimer; the homodimer further multimerizes as homohexamers or homopentamers. Interacts with human PPIA/CYPA; This interaction stabilizes the capsid. Interacts with human NUP153. Interacts with host PDZD8; this interaction stabilizes the capsid. Interacts with monkey TRIM5; this interaction destabilizes the capsid. Homodimer, whose active site consists of two apposed aspartic acid residues. In terms of assembly, heterodimer of p66 RT and p51 RT (RT p66/p51). Heterodimerization of RT is essential for DNA polymerase activity. The overall folding of the subdomains is similar in p66 RT and p51 RT but the spatial arrangements of the subdomains are dramatically different. As to quaternary structure, homotetramer; may further associate as a homohexadecamer. Part of the pre-integration complex (PIC) which is composed of viral genome, matrix protein, Vpr and integrase. Interacts with human SMARCB1/INI1 and human PSIP1/LEDGF isoform 1. Interacts with human KPNA3; this interaction might play a role in nuclear import of the pre-integration complex. Interacts with human NUP153; this interaction might play a role in nuclear import of the pre-integration complex. Mg(2+) serves as cofactor. Post-translationally, specific enzymatic cleavages by the viral protease yield mature proteins. The protease is released by autocatalytic cleavage. The polyprotein is cleaved during and after budding, this process is termed maturation. Proteolytic cleavage of p66 RT removes the RNase H domain to yield the p51 RT subunit. Nucleocapsid protein p7 might be further cleaved after virus entry. Tyrosine phosphorylated presumably in the virion by a host kinase. Phosphorylation is apparently not a major regulator of membrane association. In terms of processing, phosphorylated possibly by host MAPK1; this phosphorylation is necessary for Pin1-mediated virion uncoating. Post-translationally, methylated by host PRMT6, impairing its function by reducing RNA annealing and the initiation of reverse transcription.

Its subcellular location is the host cell membrane. It localises to the host endosome. The protein resides in the host multivesicular body. The protein localises to the virion membrane. It is found in the host nucleus. Its subcellular location is the host cytoplasm. It localises to the virion. The enzyme catalyses Specific for a P1 residue that is hydrophobic, and P1' variable, but often Pro.. The catalysed reaction is Endohydrolysis of RNA in RNA/DNA hybrids. Three different cleavage modes: 1. sequence-specific internal cleavage of RNA. Human immunodeficiency virus type 1 and Moloney murine leukemia virus enzymes prefer to cleave the RNA strand one nucleotide away from the RNA-DNA junction. 2. RNA 5'-end directed cleavage 13-19 nucleotides from the RNA end. 3. DNA 3'-end directed cleavage 15-20 nucleotides away from the primer terminus.. It carries out the reaction 3'-end directed exonucleolytic cleavage of viral RNA-DNA hybrid.. It catalyses the reaction DNA(n) + a 2'-deoxyribonucleoside 5'-triphosphate = DNA(n+1) + diphosphate. Its activity is regulated as follows. Protease: The viral protease is inhibited by many synthetic protease inhibitors (PIs), such as amprenavir, atazanavir, indinavir, loprinavir, nelfinavir, ritonavir and saquinavir. Use of protease inhibitors in tritherapy regimens permit more ambitious therapeutic strategies. Reverse transcriptase/ribonuclease H: RT can be inhibited either by nucleoside RT inhibitors (NRTIs) or by non nucleoside RT inhibitors (NNRTIs). NRTIs act as chain terminators, whereas NNRTIs inhibit DNA polymerization by binding a small hydrophobic pocket near the RT active site and inducing an allosteric change in this region. Classical NRTIs are abacavir, adefovir (PMEA), didanosine (ddI), lamivudine (3TC), stavudine (d4T), tenofovir (PMPA), zalcitabine (ddC), and zidovudine (AZT). Classical NNRTIs are atevirdine (BHAP U-87201E), delavirdine, efavirenz (DMP-266), emivirine (I-EBU), and nevirapine (BI-RG-587). The tritherapies used as a basic effective treatment of AIDS associate two NRTIs and one NNRTI. Its function is as follows. Mediates, with Gag polyprotein, the essential events in virion assembly, including binding the plasma membrane, making the protein-protein interactions necessary to create spherical particles, recruiting the viral Env proteins, and packaging the genomic RNA via direct interactions with the RNA packaging sequence (Psi). Gag-Pol polyprotein may regulate its own translation, by the binding genomic RNA in the 5'-UTR. At low concentration, the polyprotein would promote translation, whereas at high concentration, the polyprotein would encapsidate genomic RNA and then shut off translation. In terms of biological role, targets the polyprotein to the plasma membrane via a multipartite membrane-binding signal, that includes its myristoylated N-terminus. Matrix protein is part of the pre-integration complex. Implicated in the release from host cell mediated by Vpu. Binds to RNA. Functionally, forms the conical core that encapsulates the genomic RNA-nucleocapsid complex in the virion. Most core are conical, with only 7% tubular. The core is constituted by capsid protein hexamer subunits. The core is disassembled soon after virion entry. Host restriction factors such as TRIM5-alpha or TRIMCyp bind retroviral capsids and cause premature capsid disassembly, leading to blocks in reverse transcription. Capsid restriction by TRIM5 is one of the factors which restricts HIV-1 to the human species. Host PIN1 apparently facilitates the virion uncoating. On the other hand, interactions with PDZD8 or CYPA stabilize the capsid. Encapsulates and protects viral dimeric unspliced genomic RNA (gRNA). Binds these RNAs through its zinc fingers. Acts as a nucleic acid chaperone which is involved in rearangement of nucleic acid secondary structure during gRNA retrotranscription. Also facilitates template switch leading to recombination. As part of the polyprotein, participates in gRNA dimerization, packaging, tRNA incorporation and virion assembly. Its function is as follows. Aspartyl protease that mediates proteolytic cleavages of Gag and Gag-Pol polyproteins during or shortly after the release of the virion from the plasma membrane. Cleavages take place as an ordered, step-wise cascade to yield mature proteins. This process is called maturation. Displays maximal activity during the budding process just prior to particle release from the cell. Also cleaves Nef and Vif, probably concomitantly with viral structural proteins on maturation of virus particles. Hydrolyzes host EIF4GI and PABP1 in order to shut off the capped cellular mRNA translation. The resulting inhibition of cellular protein synthesis serves to ensure maximal viral gene expression and to evade host immune response. Also mediates cleavage of host YTHDF3. Mediates cleavage of host CARD8, thereby activating the CARD8 inflammasome, leading to the clearance of latent HIV-1 in patient CD4(+) T-cells after viral reactivation; in contrast, HIV-1 can evade CARD8-sensing when its protease remains inactive in infected cells prior to viral budding. In terms of biological role, multifunctional enzyme that converts the viral RNA genome into dsDNA in the cytoplasm, shortly after virus entry into the cell. This enzyme displays a DNA polymerase activity that can copy either DNA or RNA templates, and a ribonuclease H (RNase H) activity that cleaves the RNA strand of RNA-DNA heteroduplexes in a partially processive 3' to 5' endonucleasic mode. Conversion of viral genomic RNA into dsDNA requires many steps. A tRNA(3)-Lys binds to the primer-binding site (PBS) situated at the 5'-end of the viral RNA. RT uses the 3' end of the tRNA primer to perform a short round of RNA-dependent minus-strand DNA synthesis. The reading proceeds through the U5 region and ends after the repeated (R) region which is present at both ends of viral RNA. The portion of the RNA-DNA heteroduplex is digested by the RNase H, resulting in a ssDNA product attached to the tRNA primer. This ssDNA/tRNA hybridizes with the identical R region situated at the 3' end of viral RNA. This template exchange, known as minus-strand DNA strong stop transfer, can be either intra- or intermolecular. RT uses the 3' end of this newly synthesized short ssDNA to perform the RNA-dependent minus-strand DNA synthesis of the whole template. RNase H digests the RNA template except for two polypurine tracts (PPTs) situated at the 5'-end and near the center of the genome. It is not clear if both polymerase and RNase H activities are simultaneous. RNase H probably can proceed both in a polymerase-dependent (RNA cut into small fragments by the same RT performing DNA synthesis) and a polymerase-independent mode (cleavage of remaining RNA fragments by free RTs). Secondly, RT performs DNA-directed plus-strand DNA synthesis using the PPTs that have not been removed by RNase H as primers. PPTs and tRNA primers are then removed by RNase H. The 3' and 5' ssDNA PBS regions hybridize to form a circular dsDNA intermediate. Strand displacement synthesis by RT to the PBS and PPT ends produces a blunt ended, linear dsDNA copy of the viral genome that includes long terminal repeats (LTRs) at both ends. Functionally, catalyzes viral DNA integration into the host chromosome, by performing a series of DNA cutting and joining reactions. This enzyme activity takes place after virion entry into a cell and reverse transcription of the RNA genome in dsDNA. The first step in the integration process is 3' processing. This step requires a complex comprising the viral genome, matrix protein, Vpr and integrase. This complex is called the pre-integration complex (PIC). The integrase protein removes 2 nucleotides from each 3' end of the viral DNA, leaving recessed CA OH's at the 3' ends. In the second step, the PIC enters cell nucleus. This process is mediated through integrase and Vpr proteins, and allows the virus to infect a non dividing cell. This ability to enter the nucleus is specific of lentiviruses, other retroviruses cannot and rely on cell division to access cell chromosomes. In the third step, termed strand transfer, the integrase protein joins the previously processed 3' ends to the 5' ends of strands of target cellular DNA at the site of integration. The 5'-ends are produced by integrase-catalyzed staggered cuts, 5 bp apart. A Y-shaped, gapped, recombination intermediate results, with the 5'-ends of the viral DNA strands and the 3' ends of target DNA strands remaining unjoined, flanking a gap of 5 bp. The last step is viral DNA integration into host chromosome. This involves host DNA repair synthesis in which the 5 bp gaps between the unjoined strands are filled in and then ligated. Since this process occurs at both cuts flanking the HIV genome, a 5 bp duplication of host DNA is produced at the ends of HIV-1 integration. Alternatively, Integrase may catalyze the excision of viral DNA just after strand transfer, this is termed disintegration. The protein is Gag-Pol polyprotein (gag-pol) of Human immunodeficiency virus type 1 group M subtype B (isolate RF/HAT3) (HIV-1).